An 806-amino-acid polypeptide reads, in one-letter code: 85/88 kDa calcium-independent phospholipase A2 (806 aa).

ANK repeat units follow at residues 120–147, 151–181, 185–215, 219–248, 251–281, 286–312, 316–345, 349–378, and 382–403; these read WSVAHLAVELGIRECFHHSRIISCANCA, EGCTPLHLACRKGDGEILVELVQYCHTQMDV, KGETVFHYAVQGDNSQVLQLLGRNAVAGLNQ, QGLTPLHLACQLGKQEMVRVLLLCNARCNI, PNGYPIHSAMKFSQKGCAEMIISMDSSQIHS, YGASPLHWAKNAEMARMLLKRGCNVNS, AGNTALHVAVMRNRFDCAIVLLTHGANADA, HGNTPLHLAMSKDNVEMIKALIVFGAEVDT, and FGETPTFLASKIGRLVTRKAIL. 2 helical membrane passes run 480–500 and 511–531; these read LLCLDGGGVKGLIIIQLLIAI and LFDWVAGTSTGGILALAILHS. The PNPLA domain maps to 481 to 665; it reads LCLDGGGVKG…LANNPTLDAM (185 aa). The GXGXXG signature appears at 485–490; sequence GGGVKG. Residues 517-521 carry the GXSXG motif; that stretch reads GTSTG. Residue Ser519 is the Nucleophile of the active site. Asp652 functions as the Proton acceptor in the catalytic mechanism. Residues 652 to 654 carry the DGA/G motif; it reads DGG. Residues 677 to 686 are calmodulin-binding (1-9-14 motif); the sequence is RKGQANKVKK. The segment at 748–759 is calmodulin-binding (IQ motif); sequence AWCEMVGIQYFR.

Homodimer formed by catalytic domains tightly interacting through a large hydrophobic interface. The contact area involves 3 alpha helices, several loops and a part of the beta sheet from each monomer. Both active sites of the dimer are in close proximity adopting an open conformation that provide sufficient space for phospholipid access and favoring cooperativity in deacylation-reacylation reactions. Each monomer has 9 ankyrin repeats stacked side-by-side in an elongated structure oriented outwards from the catalytic core. Four different transcripts were found to be expressed in a distinct tissue distribution.

The protein resides in the cytoplasm. It is found in the cell membrane. It localises to the mitochondrion. Its subcellular location is the cell projection. The protein localises to the pseudopodium. The catalysed reaction is a 1,2-diacyl-sn-glycero-3-phosphocholine + H2O = a 1-acyl-sn-glycero-3-phosphocholine + a fatty acid + H(+). It catalyses the reaction a 1-O-alkyl-2-acyl-sn-glycero-3-phosphocholine + H2O = a 1-O-alkyl-sn-glycero-3-phosphocholine + a fatty acid + H(+). It carries out the reaction 1,2-dihexadecanoyl-sn-glycero-3-phosphocholine + H2O = 1-hexadecanoyl-sn-glycero-3-phosphocholine + hexadecanoate + H(+). The enzyme catalyses 1-hexadecanoyl-2-(9Z-octadecenoyl)-sn-glycero-3-phosphocholine + H2O = 1-hexadecanoyl-sn-glycero-3-phosphocholine + (9Z)-octadecenoate + H(+). The catalysed reaction is 1-hexadecanoyl-2-(9Z,12Z-octadecadienoyl)-sn-glycero-3-phosphocholine + H2O = (9Z,12Z)-octadecadienoate + 1-hexadecanoyl-sn-glycero-3-phosphocholine + H(+). It catalyses the reaction 1-hexadecanoyl-2-(5Z,8Z,11Z,14Z-eicosatetraenoyl)-sn-glycero-3-phosphocholine + H2O = 1-hexadecanoyl-sn-glycero-3-phosphocholine + (5Z,8Z,11Z,14Z)-eicosatetraenoate + H(+). It carries out the reaction 1-octadecanoyl-2-(5Z,8Z,11Z,14Z-eicosatetraenoyl)-sn-glycero-3-phosphocholine + H2O = 1-octadecanoyl-sn-glycero-3-phosphocholine + (5Z,8Z,11Z,14Z)-eicosatetraenoate + H(+). The enzyme catalyses 1-hexadecanoyl-2-(5Z,8Z,11Z,14Z-eicosatetraenoyl)-sn-glycero-3-phosphoethanolamine + H2O = 1-hexadecanoyl-sn-glycero-3-phosphoethanolamine + (5Z,8Z,11Z,14Z)-eicosatetraenoate + H(+). The catalysed reaction is 1,2-dihexadecanoyl-sn-glycero-3-phosphate + H2O = 1-hexadecanoyl-sn-glycero-3-phosphate + hexadecanoate + H(+). It catalyses the reaction a 1-acyl-sn-glycero-3-phosphocholine + H2O = sn-glycerol 3-phosphocholine + a fatty acid + H(+). It carries out the reaction 1-hexadecanoyl-sn-glycero-3-phosphocholine + H2O = sn-glycerol 3-phosphocholine + hexadecanoate + H(+). The enzyme catalyses 1-(5Z,8Z,11Z,14Z-eicosatetraenoyl)-sn-glycero-3-phosphocholine + H2O = sn-glycerol 3-phosphocholine + (5Z,8Z,11Z,14Z)-eicosatetraenoate + H(+). The catalysed reaction is 2-(5Z,8Z,11Z,14Z)-eicosatetraenoyl-sn-glycero-3-phosphocholine + H2O = sn-glycerol 3-phosphocholine + (5Z,8Z,11Z,14Z)-eicosatetraenoate + H(+). It catalyses the reaction 1-O-hexadecyl-2-(5Z,8Z,11Z,14Z)-eicosatetraenoyl-sn-glycero-3-phosphocholine + H2O = 1-O-hexadecyl-sn-glycero-3-phosphocholine + (5Z,8Z,11Z,14Z)-eicosatetraenoate + H(+). It carries out the reaction 1-O-hexadecyl-2-acetyl-sn-glycero-3-phosphocholine + H2O = 1-O-hexadecyl-sn-glycero-3-phosphocholine + acetate + H(+). The enzyme catalyses hexadecanoyl-CoA + H2O = hexadecanoate + CoA + H(+). The catalysed reaction is 1',3'-bis[1,2-di-(9Z-octadecenoyl)-sn-glycero-3-phospho]-glycerol + H2O = 1'-[1,2-di-(9Z-octadecenoyl)-sn-glycero-3-phospho]-3'-[1-(9Z-octadecenoyl)-sn-glycero-3-phospho]-glycerol + (9Z)-octadecenoate + H(+). It catalyses the reaction 1'-[1,2-di-(9Z-octadecenoyl)-sn-glycero-3-phospho]-3'-[1-(9Z-octadecenoyl)-sn-glycero-3-phospho]-glycerol + H2O = 1',3'-bis-[1-(9Z-octadecenoyl)-sn-glycero-3-phospho]-glycerol + (9Z)-octadecenoate + H(+). It carries out the reaction 1',3'-bis-[1,2-di-(9Z,12Z-octadecadienoyl)-sn-glycero-3-phospho]-glycerol + H2O = 1'-[1,2-di-(9Z,12Z-octadecadienoyl)-sn-glycero-3-phospho]-3'-[1-(9Z,12Z-octadecadienoyl)-sn-glycero-3-phospho]-glycerol + (9Z,12Z)-octadecadienoate + H(+). The enzyme catalyses 1-octadecanoyl-2-(15-hydroxy-(5Z,8Z,11Z,13E)-eicosatetraenoyl)-sn-glycero-3-phosphoethanolamine + H2O = 1-octadecanoyl-sn-glycero-3-phosphoethanolamine + 15-hydroxy-(5Z,8Z,11Z,13E)-eicosatetraenoate + H(+). Its activity is regulated as follows. Activated by ATP. Inhibited by calcium-activated calmodulin. Inhibited by bromoenol lactone (BEL). Its function is as follows. Calcium-independent phospholipase involved in phospholipid remodeling with implications in cellular membrane homeostasis, mitochondrial integrity and signal transduction. Hydrolyzes the ester bond of the fatty acyl group attached at sn-1 or sn-2 position of phospholipids (phospholipase A1 and A2 activity respectively), producing lysophospholipids that are used in deacylation-reacylation cycles. Hydrolyzes both saturated and unsaturated long fatty acyl chains in various glycerophospholipid classes such as phosphatidylcholines, phosphatidylethanolamines and phosphatidates, with a preference for hydrolysis at sn-2 position. Can further hydrolyze lysophospholipids carrying saturated fatty acyl chains (lysophospholipase activity). Upon oxidative stress, contributes to remodeling of mitochondrial phospholipids in pancreatic beta cells, in a repair mechanism to reduce oxidized lipid content. Preferentially hydrolyzes oxidized polyunsaturated fatty acyl chains from cardiolipins, yielding monolysocardiolipins that can be reacylated with unoxidized fatty acyls to regenerate native cardiolipin species. Hydrolyzes oxidized glycerophosphoethanolamines present in pancreatic islets, releasing oxidized polyunsaturated fatty acids such as hydroxyeicosatetraenoates (HETEs). Has thioesterase activity toward fatty-acyl CoA releasing CoA-SH known to facilitate fatty acid transport and beta-oxidation in mitochondria particularly in skeletal muscle. Plays a role in regulation of membrane dynamics and homeostasis. Selectively hydrolyzes sn-2 arachidonoyl group in plasmalogen phospholipids, structural components of lipid rafts and myelin. Regulates F-actin polymerization at the pseudopods, which is required for both speed and directionality of MCP1/CCL2-induced monocyte chemotaxis. Targets membrane phospholipids to produce potent lipid signaling messengers. Generates lysophosphatidate (LPA, 1-acyl-glycerol-3-phosphate), which acts via G-protein receptors in various cell types. Has phospholipase A2 activity toward platelet-activating factor (PAF, 1-O-alkyl-2-acetyl-sn-glycero-3-phosphocholine), likely playing a role in inactivation of this potent pro-inflammatory signaling lipid. In response to glucose, amplifies calcium influx in pancreatic beta cells to promote INS secretion. Lacks the catalytic domain and may act as a negative regulator of the catalytically active isoforms. The polypeptide is 85/88 kDa calcium-independent phospholipase A2 (PLA2G6) (Homo sapiens (Human)).